We begin with the raw amino-acid sequence, 329 residues long: 3-dehydroquinate synthase (329 aa).

It belongs to the archaeal-type DHQ synthase family.

The catalysed reaction is 2-amino-2,3,7-trideoxy-D-lyxo-hept-6-ulosonate + NAD(+) + H2O = 3-dehydroquinate + NH4(+) + NADH + H(+). In terms of biological role, catalyzes the oxidative deamination and cyclization of 2-amino-3,7-dideoxy-D-threo-hept-6-ulosonic acid (ADH) to yield 3-dehydroquinate (DHQ), which is fed into the canonical shikimic pathway of aromatic amino acid biosynthesis. This is 3-dehydroquinate synthase from Methanoregula boonei (strain DSM 21154 / JCM 14090 / 6A8).